Reading from the N-terminus, the 591-residue chain is Protein phosphatase EYA1 (591 aa).

Disordered stretches follow at residues 1-95 (MEMQ…SYPH), 150-169 (GLSQSQSPGQTGFLSYGTSF), and 239-319 (MTSS…PDSD). A compositionally biased stretch (low complexity) spans 8–23 (SPHSRLSGSSESPSGP). A compositionally biased stretch (polar residues) spans 28 to 53 (SHINSTSMTPNGTEVKTEPMSSSEIA). The segment covering 56-75 (AADGSLDSFSGSALGSSSFS) has biased composition (low complexity). Residues 78 to 87 (PAHPFSPPQI) are compositionally biased toward pro residues. A compositionally biased stretch (low complexity) spans 240–252 (TSSNTSPTTPSTN). Positions 253-286 (ATYQLQEPPSGVTSQAVTDPTAEYSTIHSPSTPI) are enriched in polar residues. The segment covering 287-302 (KETDSERLRRGSDGKS) has biased composition (basic and acidic residues). The Nucleophile role is filled by D327. Mg(2+) is bound by residues D327, D329, and D555. The Proton donor role is filled by D329.

Belongs to the HAD-like hydrolase superfamily. EYA family. Probably interacts with SIX2, SIX4 and SIX5. Interacts with H2AX in response to DNA damage. Interacts with SIX3; promotes EYA1 translocation to the nucleus. It depends on Mg(2+) as a cofactor. In terms of processing, sumoylated with SUMO1. In terms of tissue distribution, extensively expressed in cranial placodes, branchial arches, CNS and developing eye and nose.

The protein localises to the cytoplasm. Its subcellular location is the nucleus. The enzyme catalyses O-phospho-L-tyrosyl-[protein] + H2O = L-tyrosyl-[protein] + phosphate. It catalyses the reaction O-phospho-L-seryl-[protein] + H2O = L-seryl-[protein] + phosphate. The catalysed reaction is O-phospho-L-threonyl-[protein] + H2O = L-threonyl-[protein] + phosphate. Functionally, functions both as protein phosphatase and as transcriptional coactivator for SIX1, and probably also for SIX2, SIX4 and SIX5. Tyrosine phosphatase that dephosphorylates 'Tyr-142' of histone H2AX (H2AXY142ph) and promotes efficient DNA repair via the recruitment of DNA repair complexes containing MDC1. 'Tyr-142' phosphorylation of histone H2AX plays a central role in DNA repair and acts as a mark that distinguishes between apoptotic and repair responses to genotoxic stress. Its function as histone phosphatase may contribute to its function in transcription regulation during organogenesis. Also has phosphatase activity with proteins phosphorylated on Ser and Thr residues (in vitro). Required for normal embryonic development of the craniofacial and trunk skeleton, kidneys and ears. Together with SIX1, it plays an important role in hypaxial muscle development; in this it is functionally redundant with EYA2. The sequence is that of Protein phosphatase EYA1 (Eya1) from Mus musculus (Mouse).